The sequence spans 214 residues: Dual specificity phosphatase 29 (214 aa).

The region spanning 46 to 194 is the Tyrosine-protein phosphatase domain; that stretch reads HVNEVWPNLY…LRELDIELAL (149 aa). 138–145 is a substrate binding site; the sequence is HCAMGRSR. C139 serves as the catalytic Phosphocysteine intermediate.

It belongs to the protein-tyrosine phosphatase family. Non-receptor class dual specificity subfamily.

The protein localises to the cytoplasm. The protein resides in the nucleus. It catalyses the reaction O-phospho-L-tyrosyl-[protein] + H2O = L-tyrosyl-[protein] + phosphate. The enzyme catalyses O-phospho-L-seryl-[protein] + H2O = L-seryl-[protein] + phosphate. The catalysed reaction is O-phospho-L-threonyl-[protein] + H2O = L-threonyl-[protein] + phosphate. Functionally, dual specificity phosphatase able to dephosphorylate phosphotyrosine, phosphoserine and phosphothreonine residues within the same substrate, with a preference for phosphotyrosine as a substrate. Involved in the modulation of AMPK and MAPK1/2 signaling pathways. The polypeptide is Dual specificity phosphatase 29 (DUSP29) (Gallus gallus (Chicken)).